A 338-amino-acid chain; its full sequence is Endonuclease V (338 aa).

D52 and D126 together coordinate Mg(2+). A disordered region spans residues 253–338 (QLGVAPAQRK…PSPAWVQSPP (86 aa)). Composition is skewed to basic and acidic residues over residues 260–270 (QRKDRSQKEQR) and 287–323 (RPPE…HQED). The segment covering 328-338 (PPSPAWVQSPP) has biased composition (pro residues).

This sequence belongs to the endonuclease V family. In terms of assembly, monomer. Interacts with PABPC1; the interaction is RNA-dependent and stimulates ENDOV activity. Mg(2+) serves as cofactor. Highest levels detected in liver with high levels also found in heart, kidney and testis. Expressed at low levels in brain.

It localises to the cytoplasm. Its subcellular location is the nucleus. The protein resides in the nucleolus. It is found in the stress granule. Endoribonuclease that specifically cleaves inosine-containing RNAs: cleaves RNA at the second phosphodiester bond 3' to inosine. Active against both single-stranded and double-stranded RNAs. Has strong preference for single-stranded RNAs (ssRNAs) toward double-stranded RNAs (dsRNAs). Cleaves mRNAs and tRNAs containing inosine. Also able to cleave structure-specific dsRNA substrates containing the specific sites 5'-IIUI-3' and 5'-UIUU-3'. Inosine is present in a number of RNAs following editing; the function of inosine-specific endoribonuclease is still unclear: it could either play a regulatory role in edited RNAs, or be involved in antiviral response by removing the hyperedited long viral dsRNA genome that has undergone A-to-I editing. Binds branched DNA structures. The protein is Endonuclease V (Endov) of Mus musculus (Mouse).